A 544-amino-acid polypeptide reads, in one-letter code: Chaperonin GroEL (544 aa).

ATP-binding positions include 30 to 33 (TLGP), Lys-51, 87 to 91 (DGTTT), Gly-415, 481 to 483 (DAL), and Asp-497.

This sequence belongs to the chaperonin (HSP60) family. Forms a cylinder of 14 subunits composed of two heptameric rings stacked back-to-back. Interacts with the co-chaperonin GroES.

The protein localises to the cytoplasm. The catalysed reaction is ATP + H2O + a folded polypeptide = ADP + phosphate + an unfolded polypeptide.. Its function is as follows. Together with its co-chaperonin GroES, plays an essential role in assisting protein folding. The GroEL-GroES system forms a nano-cage that allows encapsulation of the non-native substrate proteins and provides a physical environment optimized to promote and accelerate protein folding. The sequence is that of Chaperonin GroEL from Chlamydia trachomatis serovar A (strain ATCC VR-571B / DSM 19440 / HAR-13).